Here is a 338-residue protein sequence, read N- to C-terminus: Probable arabinan endo-1,5-alpha-L-arabinosidase A (338 aa).

The signal sequence occupies residues 1–20; sequence MRASFVVTAPLLAAAVHGYA. Asp33 (proton acceptor) is an active-site residue. Residue Glu217 is the Proton donor of the active site.

This sequence belongs to the glycosyl hydrolase 43 family.

It localises to the secreted. The enzyme catalyses Endohydrolysis of (1-&gt;5)-alpha-arabinofuranosidic linkages in (1-&gt;5)-arabinans.. Its pathway is glycan metabolism; L-arabinan degradation. In terms of biological role, endo-1,5-alpha-L-arabinanase involved in degradation of pectin. Its preferred substrate is linear 1,5-alpha-L-arabinan. The polypeptide is Probable arabinan endo-1,5-alpha-L-arabinosidase A (abnA) (Aspergillus terreus (strain NIH 2624 / FGSC A1156)).